Here is a 179-residue protein sequence, read N- to C-terminus: Transcription factor BOA15 (179 aa).

It is found in the nucleus. Functionally, transcription factor that probably coregulates the gene clusters that mediates the biosynthesis of botcinin acid and its botcinin derivatives, acetate-derived polyketides that contribute to virulence when combined with the sesquiterpene botrydial. Botcinin acid and its derivatives have been shown to induce chlorosis and necrosis during host plant infection, but also have antifungal activities. In Botryotinia fuckeliana (strain B05.10) (Noble rot fungus), this protein is Transcription factor BOA15.